Consider the following 301-residue polypeptide: Polyamine aminopropyltransferase (301 aa).

The PABS domain occupies 4–240 (WHWLLEWQTP…GLWGFVYGGV (237 aa)). Glutamine 33 serves as a coordination point for S-methyl-5'-thioadenosine. The spermidine site is built by histidine 64 and glutamate 89. S-methyl-5'-thioadenosine contacts are provided by residues aspartate 109 and 141–142 (DG). Aspartate 159 serves as the catalytic Proton acceptor.

This sequence belongs to the spermidine/spermine synthase family. As to quaternary structure, homodimer or homotetramer.

The protein localises to the cytoplasm. It catalyses the reaction S-adenosyl 3-(methylsulfanyl)propylamine + putrescine = S-methyl-5'-thioadenosine + spermidine + H(+). It functions in the pathway amine and polyamine biosynthesis; spermidine biosynthesis; spermidine from putrescine: step 1/1. In terms of biological role, catalyzes the irreversible transfer of a propylamine group from the amino donor S-adenosylmethioninamine (decarboxy-AdoMet) to putrescine (1,4-diaminobutane) to yield spermidine. The polypeptide is Polyamine aminopropyltransferase (Saccharolobus islandicus (strain L.S.2.15 / Lassen #1) (Sulfolobus islandicus)).